The sequence spans 884 residues: DNA mismatch repair protein MutS (884 aa).

ATP is bound at residue 643–650 (GPNMGGKS).

It belongs to the DNA mismatch repair MutS family.

This protein is involved in the repair of mismatches in DNA. It is possible that it carries out the mismatch recognition step. This protein has a weak ATPase activity. This chain is DNA mismatch repair protein MutS, found in Methylobacillus flagellatus (strain ATCC 51484 / DSM 6875 / VKM B-1610 / KT).